Reading from the N-terminus, the 314-residue chain is E3 ubiquitin-protein ligase CHIP (314 aa).

Over residues 1-11 (MKGKEEREREG) the composition is skewed to basic and acidic residues. The disordered stretch occupies residues 1 to 47 (MKGKEEREREGGGGAVGPGAAGPGAGGGSPEKSHSAQEHKEQGNRLF). Over residues 12–29 (GGGAVGPGAAGPGAGGGS) the composition is skewed to gly residues. The span at 31 to 43 (EKSHSAQEHKEQG) shows a compositional bias: basic and acidic residues. 3 TPR repeats span residues 36–69 (AQEH…NPLV), 70–103 (AVYY…DGQS), and 105–137 (KAHF…AKEQ). Residues 237 to 311 (DIPDYLCGKI…DAFISENGWV (75 aa)) form the U-box domain.

As to quaternary structure, homodimer.

Its subcellular location is the cytoplasm. It is found in the nucleus. The protein localises to the mitochondrion. It carries out the reaction S-ubiquitinyl-[E2 ubiquitin-conjugating enzyme]-L-cysteine + [acceptor protein]-L-lysine = [E2 ubiquitin-conjugating enzyme]-L-cysteine + N(6)-ubiquitinyl-[acceptor protein]-L-lysine.. Its function is as follows. E3 ubiquitin-protein ligase which targets misfolded chaperone substrates towards proteasomal degradation. Collaborates with ATXN3 in the degradation of misfolded chaperone substrates: ATXN3 restricting the length of ubiquitin chain attached to STUB1/CHIP substrates and preventing further chain extension. This is E3 ubiquitin-protein ligase CHIP from Gallus gallus (Chicken).